Here is a 363-residue protein sequence, read N- to C-terminus: G-protein coupled receptor 78 (363 aa).

At 1 to 7 the chain is on the extracellular side; that stretch reads MGPGEAL. A helical transmembrane segment spans residues 8–28; that stretch reads LAGLLVMVLAVALLSNALVLL. Residues 29–47 are Cytoplasmic-facing; the sequence is CCAYSAELRTRASGVLLVN. Residues 48 to 68 form a helical membrane-spanning segment; it reads LSLGHLLLAALDMPFTLLGVM. The Extracellular segment spans residues 69-80; that stretch reads RGRTPSAPGACQ. Cys-79 and Cys-156 are joined by a disulfide. A helical transmembrane segment spans residues 81–101; it reads VIGFLDTFLASNAALSVAALS. At 102 to 122 the chain is on the cytoplasmic side; that stretch reads ADQWLAVGFPLRYAGRLRPRY. The chain crosses the membrane as a helical span at residues 123 to 143; the sequence is AGLLLGCAWGQSLAFSGAALG. Topologically, residues 144 to 168 are extracellular; the sequence is CSWLGYSSAFASCSLRLPPEPERPR. The helical transmembrane segment at 169–189 threads the bilayer; it reads FAAFTATLHAVGFVLPLAVLC. Residues 190–242 are Cytoplasmic-facing; the sequence is LTSLQVHRVARRHCQRMDTVTMKALALLADLHPSVRQRCLIQQKRRRHRATRK. A helical membrane pass occupies residues 243-263; that stretch reads IGIAIATFLICFAPYVMTRLA. Residues 264–277 are Extracellular-facing; sequence ELVPFVTVNAQWGI. A helical transmembrane segment spans residues 278-297; it reads LSKCLTYSKAVADPFTYSLL. The Cytoplasmic segment spans residues 298–363; that stretch reads RRPFRQVLAG…ENDSCLQQTH (66 aa). The disordered stretch occupies residues 340 to 363; sequence TPRPASTHNGSVDTENDSCLQQTH. A compositionally biased stretch (polar residues) spans 343 to 363; that stretch reads PASTHNGSVDTENDSCLQQTH.

It belongs to the G-protein coupled receptor 1 family. As to expression, high level of expression in placenta. Expressed throughout the brain at low level. No expression detected in skeletal muscle, lung, heart, liver, pancreas, or kidney.

It is found in the cell membrane. In terms of biological role, orphan receptor. Displays a significant level of constitutive activity. Its effect is mediated by G(s)-alpha protein that stimulate adenylate cyclase, resulting in an elevation of intracellular cAMP. The polypeptide is G-protein coupled receptor 78 (GPR78) (Homo sapiens (Human)).